Consider the following 122-residue polypeptide: Large ribosomal subunit protein uL22 (122 aa).

Belongs to the universal ribosomal protein uL22 family. In terms of assembly, part of the 50S ribosomal subunit.

In terms of biological role, this protein binds specifically to 23S rRNA; its binding is stimulated by other ribosomal proteins, e.g. L4, L17, and L20. It is important during the early stages of 50S assembly. It makes multiple contacts with different domains of the 23S rRNA in the assembled 50S subunit and ribosome. Its function is as follows. The globular domain of the protein is located near the polypeptide exit tunnel on the outside of the subunit, while an extended beta-hairpin is found that lines the wall of the exit tunnel in the center of the 70S ribosome. The protein is Large ribosomal subunit protein uL22 of Prochlorococcus marinus (strain MIT 9303).